The chain runs to 99 residues: MPNTKSAARALRRSERRRLRNRMWRSMARTFIKKARKLMEAGDLEAAARVIGDAISTLDRAAAKGAIHKNNAARRKSRLMKRFNALVKARLQQGQEQST.

Belongs to the bacterial ribosomal protein bS20 family.

In terms of biological role, binds directly to 16S ribosomal RNA. This is Small ribosomal subunit protein bS20 from Thermomicrobium roseum (strain ATCC 27502 / DSM 5159 / P-2).